The primary structure comprises 156 residues: Movement protein P17 (156 aa).

The homodimerization stretch occupies residues 38 to 54 (AEDVEEEAIAAQEELEF). The RNA-binding stretch occupies residues 57 to 156 (DEAQARHSCL…RAAPKLIKRG (100 aa)). Phosphoserine occurs at positions 71, 79, 137, and 140. The disordered stretch occupies residues 106 to 156 (ASYFSSSARPLPPPPAPSLMSWTPIAKYHPSSPTSTSSKLRRAAPKLIKRG). Over residues 144–156 (KLRRAAPKLIKRG) the composition is skewed to basic residues.

This sequence belongs to the polerovirus movement protein family. Homodimer. Expressed as a nonphosphorylated 20kDa form and a phosphorylated 22kDa form. Phosphorylated by a host PKC-related kinase. Serine phosphorylation is required for plamodesma targeting.

It localises to the host cell junction. Its subcellular location is the host plasmodesma. The protein resides in the host chloroplast envelope. It is found in the host Golgi apparatus. The protein localises to the host mitochondrion outer membrane. In terms of biological role, together with movement protein P3a, facilitates long-distance movement of virions in host. Transports viral genome to neighboring plant cells directly through plasmosdesmata, without any budding. The movement protein allows efficient cell to cell propagation, by bypassing the host cell wall barrier. Binds ssRNA. In Solanum tuberosum (Potato), this protein is Movement protein P17.